Here is a 172-residue protein sequence, read N- to C-terminus: Large ribosomal subunit protein uL10 (172 aa).

Belongs to the universal ribosomal protein uL10 family. In terms of assembly, part of the ribosomal stalk of the 50S ribosomal subunit. The N-terminus interacts with L11 and the large rRNA to form the base of the stalk. The C-terminus forms an elongated spine to which L12 dimers bind in a sequential fashion forming a multimeric L10(L12)X complex.

Its function is as follows. Forms part of the ribosomal stalk, playing a central role in the interaction of the ribosome with GTP-bound translation factors. This Chlorobium luteolum (strain DSM 273 / BCRC 81028 / 2530) (Pelodictyon luteolum) protein is Large ribosomal subunit protein uL10.